Here is a 341-residue protein sequence, read N- to C-terminus: L-threonine 3-dehydrogenase (341 aa).

Residue C38 participates in Zn(2+) binding. Active-site charge relay system residues include T40 and H43. 6 residues coordinate Zn(2+): H63, E64, C93, C96, C99, and C107. NAD(+) is bound by residues I175, D195, R200, L262–I264, and I286–Y287.

The protein belongs to the zinc-containing alcohol dehydrogenase family. Homotetramer. Zn(2+) serves as cofactor.

The protein resides in the cytoplasm. The enzyme catalyses L-threonine + NAD(+) = (2S)-2-amino-3-oxobutanoate + NADH + H(+). Its pathway is amino-acid degradation; L-threonine degradation via oxydo-reductase pathway; glycine from L-threonine: step 1/2. Catalyzes the NAD(+)-dependent oxidation of L-threonine to 2-amino-3-ketobutyrate. The protein is L-threonine 3-dehydrogenase of Shewanella sediminis (strain HAW-EB3).